Here is a 479-residue protein sequence, read N- to C-terminus: G-rich sequence factor 1 (479 aa).

Residues 1 to 116 (MAGTRWVLGA…AAAAGPARGY (116 aa)) constitute a mitochondrion transit peptide. RRM domains are found at residues 149 to 245 (YLIR…PSPV) and 249 to 325 (GVVR…PSRR). At Ser243 the chain carries Phosphoserine. A Phosphoserine modification is found at Ser334. In terms of domain architecture, RRM 3 spans 400 to 479 (HFVHMRGLPF…LFLNSCPKGK (80 aa)).

As to quaternary structure, monomer. Found in a complex with DDX28, DHX30, FASTKD2 and FASTKD5. Interacts with the mitochondrial RNase P complex subunit TRMT10C/MRPP1. Interacts with the 2 components of the mitochondrial degradosome complex, PNPT1 and SUPV3L1, in an RNA-dependent manner.

The protein localises to the mitochondrion matrix. Its function is as follows. Regulator of post-transcriptional mitochondrial gene expression, required for assembly of the mitochondrial ribosome and for recruitment of mRNA and lncRNA. Binds RNAs containing the 14 base G-rich element. Preferentially binds RNAs transcribed from three contiguous genes on the light strand of mtDNA, the ND6 mRNA, and the long non-coding RNAs for MT-CYB and MT-ND5, each of which contains multiple consensus binding sequences. Involved in the degradosome-mediated decay of non-coding mitochondrial transcripts (MT-ncRNA) and tRNA-like molecules. Acts by unwinding G-quadruplex RNA structures in MT-ncRNA, thus facilitating their degradation by the degradosome. G-quadruplexes (G4) are non-canonical 4 stranded structures formed by transcripts from the light strand of mtDNA. The polypeptide is G-rich sequence factor 1 (Grsf1) (Mus musculus (Mouse)).